Here is a 59-residue protein sequence, read N- to C-terminus: Cytochrome c oxidase subunit 9, mitochondrial (59 aa).

Residues 2–8 (TIAPITG) lie on the Mitochondrial matrix side of the membrane. Residues 9–44 (TIKRRVIMDIVLGFSLGGVMASYWWWGFHMDKINKR) traverse the membrane as a helical segment. At 45–56 (EKFYAELAERKK) the chain is on the mitochondrial intermembrane side. Residues 57-59 (QEN) constitute a propeptide, removed in mature form.

This sequence belongs to the fungal cytochrome c oxidase subunit 7a family. As to quaternary structure, component of the cytochrome c oxidase (complex IV, CIV), a multisubunit enzyme composed of 12 subunits. The complex is composed of a catalytic core of 3 subunits COX1, COX2 and COX3, encoded in the mitochondrial DNA, and 9 supernumerary subunits COX4, COX5A (or COX5B), COX6, COX7, COX8, COX9, COX12, COX13 and COX26, which are encoded in the nuclear genome. The complex exists as a monomer or a dimer and forms supercomplexes (SCs) in the inner mitochondrial membrane with a dimer of ubiquinol-cytochrome c oxidoreductase (cytochrome b-c1 complex, complex III, CIII), resulting in 2 different assemblies (supercomplexes III(2)IV and III(2)IV(2)).

Its subcellular location is the mitochondrion inner membrane. Its pathway is energy metabolism; oxidative phosphorylation. In terms of biological role, component of the cytochrome c oxidase, the last enzyme in the mitochondrial electron transport chain which drives oxidative phosphorylation. The respiratory chain contains 3 multisubunit complexes succinate dehydrogenase (complex II, CII), ubiquinol-cytochrome c oxidoreductase (cytochrome b-c1 complex, complex III, CIII) and cytochrome c oxidase (complex IV, CIV), that cooperate to transfer electrons derived from NADH and succinate to molecular oxygen, creating an electrochemical gradient over the inner membrane that drives transmembrane transport and the ATP synthase. Cytochrome c oxidase is the component of the respiratory chain that catalyzes the reduction of oxygen to water. Electrons originating from reduced cytochrome c in the intermembrane space (IMS) are transferred via the dinuclear copper A center (CU(A)) of COX2 and heme A of COX1 to the active site in COX1, a binuclear center (BNC) formed by heme A3 and copper B (CU(B)). The BNC reduces molecular oxygen to 2 water molecules using 4 electrons from cytochrome c in the IMS and 4 protons from the mitochondrial matrix. This Saccharomyces cerevisiae (strain ATCC 204508 / S288c) (Baker's yeast) protein is Cytochrome c oxidase subunit 9, mitochondrial (COX9).